An 822-amino-acid polypeptide reads, in one-letter code: Endonuclease MutS2 (822 aa).

Residue 348–355 (GPNTGGKT) coordinates ATP. The segment at 707–737 (SLNGKKVEPPPKSEPVPKKVKAEPPATEAKS) is disordered. Positions 709-728 (NGKKVEPPPKSEPVPKKVKA) are enriched in basic and acidic residues. In terms of domain architecture, Smr spans 749-822 (LDCRGDRLER…GAGVTIAYLR (74 aa)).

This sequence belongs to the DNA mismatch repair MutS family. MutS2 subfamily. As to quaternary structure, homodimer. Binds to stalled ribosomes, contacting rRNA.

Its function is as follows. Endonuclease that is involved in the suppression of homologous recombination and thus may have a key role in the control of bacterial genetic diversity. Acts as a ribosome collision sensor, splitting the ribosome into its 2 subunits. Detects stalled/collided 70S ribosomes which it binds and splits by an ATP-hydrolysis driven conformational change. Acts upstream of the ribosome quality control system (RQC), a ribosome-associated complex that mediates the extraction of incompletely synthesized nascent chains from stalled ribosomes and their subsequent degradation. Probably generates substrates for RQC. This chain is Endonuclease MutS2, found in Synechocystis sp. (strain ATCC 27184 / PCC 6803 / Kazusa).